The sequence spans 152 residues: Ribosomal RNA large subunit methyltransferase H (152 aa).

Residues L65, G96, and 115 to 120 (LGPMTW) contribute to the S-adenosyl-L-methionine site.

This sequence belongs to the RNA methyltransferase RlmH family. In terms of assembly, homodimer.

It localises to the cytoplasm. The enzyme catalyses pseudouridine(1915) in 23S rRNA + S-adenosyl-L-methionine = N(3)-methylpseudouridine(1915) in 23S rRNA + S-adenosyl-L-homocysteine + H(+). Its function is as follows. Specifically methylates the pseudouridine at position 1915 (m3Psi1915) in 23S rRNA. The polypeptide is Ribosomal RNA large subunit methyltransferase H (Gluconacetobacter diazotrophicus (strain ATCC 49037 / DSM 5601 / CCUG 37298 / CIP 103539 / LMG 7603 / PAl5)).